The following is a 204-amino-acid chain: MMRTPITTHPLLLLLLLQQLLQPVQFQEVDTDFETPEDKMEEFREYLEEFRRTGPTRPPTKEKVERRVIIEPGMPLYHRDYCNEEIMRKNVYHKQRCVTEHYFLLMQYDELEKICYNRFVPCKNGVRKCNRSKGLVEGVYCNLTEAFKIPRCKYKSFYRRGYVLITCAWQNEIHKLIPHTINDLVEPPKHRSFLNEDGVFVIPP.

A signal peptide spans 1-26 (MMRTPITTHPLLLLLLLQQLLQPVQF). 3 disulfide bridges follow: cysteine 97/cysteine 152, cysteine 115/cysteine 167, and cysteine 122/cysteine 129. N-linked (GlcNAc...) asparagine glycans are attached at residues asparagine 130 and asparagine 142.

Belongs to the pancreatic ribonuclease family.

Its subcellular location is the secreted. In terms of biological role, does not exhibit any ribonuclease activity. This Macaca nemestrina (Pig-tailed macaque) protein is Inactive ribonuclease-like protein 9 (RNASE9).